The primary structure comprises 418 residues: Glutamyl-tRNA reductase (418 aa).

Residues 49–52 (TCNR), Ser108, 113–115 (EPQ), and Gln119 each bind substrate. Residue Cys50 is the Nucleophile of the active site. 188–193 (GAGETI) lines the NADP(+) pocket.

Belongs to the glutamyl-tRNA reductase family. As to quaternary structure, homodimer.

It catalyses the reaction (S)-4-amino-5-oxopentanoate + tRNA(Glu) + NADP(+) = L-glutamyl-tRNA(Glu) + NADPH + H(+). The protein operates within porphyrin-containing compound metabolism; protoporphyrin-IX biosynthesis; 5-aminolevulinate from L-glutamyl-tRNA(Glu): step 1/2. Functionally, catalyzes the NADPH-dependent reduction of glutamyl-tRNA(Glu) to glutamate 1-semialdehyde (GSA). This chain is Glutamyl-tRNA reductase, found in Aliivibrio salmonicida (strain LFI1238) (Vibrio salmonicida (strain LFI1238)).